A 561-amino-acid chain; its full sequence is Potassium-transporting ATPase potassium-binding subunit (561 aa).

12 helical membrane passes run 1-21 (MMAS…LLAR), 62-82 (YLLA…LILM), 132-152 (GLTV…FALM), 173-193 (ITLY…VSQG), 253-273 (FVQM…FGDV), 283-303 (LLWS…WAEV), 327-347 (FGIL…CGAV), 356-376 (ALGG…FGGV), 379-399 (GLYG…LMIG), 416-436 (MTAL…ALAM), 483-503 (MLLA…VLAI), and 526-546 (LFIA…FIPA).

The protein belongs to the KdpA family. As to quaternary structure, the system is composed of three essential subunits: KdpA, KdpB and KdpC.

The protein resides in the cell inner membrane. Part of the high-affinity ATP-driven potassium transport (or Kdp) system, which catalyzes the hydrolysis of ATP coupled with the electrogenic transport of potassium into the cytoplasm. This subunit binds the periplasmic potassium ions and delivers the ions to the membrane domain of KdpB through an intramembrane tunnel. In Erwinia tasmaniensis (strain DSM 17950 / CFBP 7177 / CIP 109463 / NCPPB 4357 / Et1/99), this protein is Potassium-transporting ATPase potassium-binding subunit.